We begin with the raw amino-acid sequence, 505 residues long: 2,3-bisphosphoglycerate-independent phosphoglycerate mutase (505 aa).

Mn(2+)-binding residues include Asp12 and Ser62. Ser62 acts as the Phosphoserine intermediate in catalysis. Residues His123, 153–154, Arg185, Arg191, 257–260, and Lys330 contribute to the substrate site; these read RD and RPDR. 5 residues coordinate Mn(2+): Asp397, His401, Asp438, His439, and His456.

It belongs to the BPG-independent phosphoglycerate mutase family. In terms of assembly, monomer. The cofactor is Mn(2+).

The catalysed reaction is (2R)-2-phosphoglycerate = (2R)-3-phosphoglycerate. The protein operates within carbohydrate degradation; glycolysis; pyruvate from D-glyceraldehyde 3-phosphate: step 3/5. Catalyzes the interconversion of 2-phosphoglycerate and 3-phosphoglycerate. The polypeptide is 2,3-bisphosphoglycerate-independent phosphoglycerate mutase (Staphylococcus aureus (strain MRSA252)).